Here is a 354-residue protein sequence, read N- to C-terminus: Probable protein phosphatase 2C 69 (354 aa).

One can recognise a PPM-type phosphatase domain in the interval serine 33–phenylalanine 279. Residues aspartate 69, glycine 70, aspartate 231, and aspartate 270 each coordinate Mn(2+). A disordered region spans residues histidine 289–valine 354. Polar residues-rich tracts occupy residues isoleucine 309–valine 328 and alanine 336–asparagine 348.

This sequence belongs to the PP2C family. Requires Mg(2+) as cofactor. It depends on Mn(2+) as a cofactor.

It catalyses the reaction O-phospho-L-seryl-[protein] + H2O = L-seryl-[protein] + phosphate. It carries out the reaction O-phospho-L-threonyl-[protein] + H2O = L-threonyl-[protein] + phosphate. In Arabidopsis thaliana (Mouse-ear cress), this protein is Probable protein phosphatase 2C 69.